The following is a 123-amino-acid chain: Putative iron-sulfur cluster insertion protein ErpA (123 aa).

The iron-sulfur cluster site is built by Cys-51, Cys-115, and Cys-117.

Belongs to the HesB/IscA family. In terms of assembly, homodimer. It depends on iron-sulfur cluster as a cofactor.

Functionally, required for insertion of 4Fe-4S clusters. The protein is Putative iron-sulfur cluster insertion protein ErpA of Burkholderia ambifaria (strain ATCC BAA-244 / DSM 16087 / CCUG 44356 / LMG 19182 / AMMD) (Burkholderia cepacia (strain AMMD)).